Consider the following 335-residue polypeptide: Ferrochelatase (335 aa).

Fe cation is bound by residues His-192 and Glu-291.

The protein belongs to the ferrochelatase family.

Its subcellular location is the cytoplasm. It carries out the reaction heme b + 2 H(+) = protoporphyrin IX + Fe(2+). It functions in the pathway porphyrin-containing compound metabolism; protoheme biosynthesis; protoheme from protoporphyrin-IX: step 1/1. Functionally, catalyzes the ferrous insertion into protoporphyrin IX. This chain is Ferrochelatase, found in Bdellovibrio bacteriovorus (strain ATCC 15356 / DSM 50701 / NCIMB 9529 / HD100).